The chain runs to 391 residues: FLUCTUATING-LIGHT-ACCLIMATION protein 1, chloroplastic (391 aa).

The transit peptide at 1 to 48 (MASSSTFLELTPFQWNQPLPYTQRPHHRTVLLYSKPQRRSNSIRLQIS) directs the protein to the chloroplast. A helical transmembrane segment spans residues 87-107 (AIAAVLLGLLLFYDPNSALAA). A compositionally biased stretch (low complexity) spans 116 to 138 (SFSSRSRSSSSSSSQSYSVPRTS). The disordered stretch occupies residues 116–140 (SFSSRSRSSSSSSSQSYSVPRTSNP). 2 helical membrane passes run 168-188 (FGFG…AFVL) and 321-341 (YIVV…PING).

Belongs to the FLAP family.

It localises to the plastid. Its subcellular location is the chloroplast thylakoid membrane. The protein localises to the chloroplast membrane. It is found in the chloroplast envelope. Monitors proton H(+) homeostasis in chloroplasts to manipulate luminal acidification levels appropriately to balance photoprotection and photochemical processes. Required during acclimation response to fluctuating light (e.g. photosynthetic activity optimization) by controlling non-photochemical quenching (NPQ); acts independently from DLDG1. The polypeptide is FLUCTUATING-LIGHT-ACCLIMATION protein 1, chloroplastic (Arabidopsis thaliana (Mouse-ear cress)).